Here is a 178-residue protein sequence, read N- to C-terminus: Large ribosomal subunit protein eL20 (178 aa).

Belongs to the eukaryotic ribosomal protein eL20 family.

This chain is Large ribosomal subunit protein eL20 (RPL18A), found in Oryza sativa subsp. japonica (Rice).